The chain runs to 270 residues: Probable septum site-determining protein MinC (270 aa).

A disordered region spans residues 105 to 129 (DRRAPSSKAADEAPVQQAEPAAPAA). The span at 116–129 (EAPVQQAEPAAPAA) shows a compositional bias: low complexity.

It belongs to the MinC family. Interacts with MinD and FtsZ.

Functionally, cell division inhibitor that blocks the formation of polar Z ring septums. Rapidly oscillates between the poles of the cell to destabilize FtsZ filaments that have formed before they mature into polar Z rings. Prevents FtsZ polymerization. This Burkholderia pseudomallei (strain 668) protein is Probable septum site-determining protein MinC.